Consider the following 278-residue polypeptide: Polyamine aminopropyltransferase (278 aa).

The 234-residue stretch at 5–238 folds into the PABS domain; it reads ELWFTEQQTP…GLWSFTMGSK (234 aa). Residue Gln34 participates in S-methyl-5'-thioadenosine binding. Residues His65 and Asp89 each coordinate spermidine. S-methyl-5'-thioadenosine is bound by residues Glu109 and 140 to 141; that span reads DG. Asp158 acts as the Proton acceptor in catalysis. 158-161 lines the spermidine pocket; sequence DSTD. Pro165 serves as a coordination point for S-methyl-5'-thioadenosine.

The protein belongs to the spermidine/spermine synthase family. In terms of assembly, homodimer or homotetramer.

It is found in the cytoplasm. It carries out the reaction S-adenosyl 3-(methylsulfanyl)propylamine + putrescine = S-methyl-5'-thioadenosine + spermidine + H(+). Its pathway is amine and polyamine biosynthesis; spermidine biosynthesis; spermidine from putrescine: step 1/1. Catalyzes the irreversible transfer of a propylamine group from the amino donor S-adenosylmethioninamine (decarboxy-AdoMet) to putrescine (1,4-diaminobutane) to yield spermidine. The protein is Polyamine aminopropyltransferase of Caldicellulosiruptor saccharolyticus (strain ATCC 43494 / DSM 8903 / Tp8T 6331).